The primary structure comprises 215 residues: Pyrrolidone-carboxylate peptidase (215 aa).

Catalysis depends on residues E80, C143, and H167.

Belongs to the peptidase C15 family. In terms of assembly, homotetramer.

The protein resides in the cytoplasm. The enzyme catalyses Release of an N-terminal pyroglutamyl group from a polypeptide, the second amino acid generally not being Pro.. Its function is as follows. Removes 5-oxoproline from various penultimate amino acid residues except L-proline. The sequence is that of Pyrrolidone-carboxylate peptidase from Yersinia pseudotuberculosis serotype O:3 (strain YPIII).